Consider the following 424-residue polypeptide: Calreticulin (424 aa).

The signal sequence occupies residues 1-19 (MRLLLCLIFLVFVFNFALS). An intrachain disulfide couples cysteine 105 to cysteine 137. The an alpha-D-glucoside site is built by tyrosine 109, lysine 111, tyrosine 128, and aspartate 135. 7 repeat units span residues 191–202 (IQAGNLADDWEL), 210–221 (DPKQSKPVDWVD), 227–238 (DPEDVKPAGHDD), 246–256 (PEAVKPEDWNE), 260–270 (GEWEAPTIANP), 274–284 (GEWKAKKIPNP), and 288–298 (GEWVHPLIDNP). The interval 191–256 (IQAGNLADDW…EAVKPEDWNE (66 aa)) is 4 X 12 AA approximate repeats. Residues 260–298 (GEWEAPTIANPEYKGEWKAKKIPNPEYKGEWVHPLIDNP) are 3 X 11 AA approximate repeats. Residue glutamate 318 participates in an alpha-D-glucoside binding. Residues 370–385 (RKKADEKLAAEKAAEK) show a composition bias toward basic and acidic residues. The tract at residues 370–424 (RKKADEKLAAEKAAEKEAEEADEEEEEVAEEDLVKTDDKKEEVKKSTKKVDHDEL) is disordered. Acidic residues predominate over residues 386–400 (EAEEADEEEEEVAEE). The span at 401-424 (DLVKTDDKKEEVKKSTKKVDHDEL) shows a compositional bias: basic and acidic residues. A Prevents secretion from ER motif is present at residues 421–424 (HDEL).

It belongs to the calreticulin family.

The protein localises to the endoplasmic reticulum lumen. Functionally, molecular calcium-binding chaperone promoting folding, oligomeric assembly and quality control in the ER via the calreticulin/calnexin cycle. This lectin may interact transiently with almost all of the monoglucosylated glycoproteins that are synthesized in the ER. This chain is Calreticulin (crtA), found in Dictyostelium discoideum (Social amoeba).